The primary structure comprises 340 residues: Meiotic recombination protein DMC1/LIM15 homolog (340 aa).

ATP is bound at residue Gly-126–Thr-133. Residue Arg-230 participates in dsDNA binding. 5 residues coordinate ssDNA: Arg-230, Phe-233, Arg-236, Arg-242, and Arg-311. The dsDNA site is built by Arg-236 and Arg-242.

The protein belongs to the RecA family. DMC1 subfamily. Double stacked ring-shaped homooctamer. Interacts with BRCA2. Interacts with the MND1-PSMC3IP heterodimer. Interacts with RAD51AP1; the interaction is direct and stimulates DMC1-mediated homologous recombination. In terms of tissue distribution, testis.

The protein localises to the nucleus. It is found in the chromosome. In terms of biological role, participates in meiotic recombination, specifically in homologous strand assimilation, which is required for the resolution of meiotic double-strand breaks. The chain is Meiotic recombination protein DMC1/LIM15 homolog from Mus musculus (Mouse).